A 639-amino-acid chain; its full sequence is Lactose permease (639 aa).

The interval 1–473 is permease; sequence MKDITKQKFS…AEIVIELEKT (473 aa). The next 12 helical transmembrane spans lie at 20-40, 59-79, 99-119, 124-144, 176-196, 207-227, 264-284, 294-314, 322-342, 347-367, 398-418, and 433-453; these read FALG…YFIV, IGLI…IDPI, VIGA…IFGL, WIAF…FYSF, IGWN…TFIA, WFGF…AVAF, LAYL…FYFF, FWIA…LYPV, KVLF…FIFG, MMVT…VVVL, ITGA…GMTG, and FEIY…VIFL. The 105-residue stretch at 505–609 folds into the PTS EIIA type-1 domain; it reads NEVDGNTLTG…QDDIIMYFTQ (105 aa). The residue at position 557 (His557) is a Phosphohistidine; by HPr.

It in the N-terminal section; belongs to the sodium:galactoside symporter (TC 2.A.2) family.

Its subcellular location is the cell membrane. Functionally, responsible for transport of beta-galactosides into the cell, with the concomitant uptake of protons (symport system), and also for transport of homologous and heterologous exchange of beta-galactosides. The chain is Lactose permease (lacS) from Leuconostoc lactis.